The following is a 24-amino-acid chain: Unknown protein 3 (24 aa).

This Pseudotsuga menziesii (Douglas-fir) protein is Unknown protein 3.